A 603-amino-acid polypeptide reads, in one-letter code: Nuclear receptor subfamily 2 group C member 1 (603 aa).

The segment at 1-178 (MATIEEIAHQ…RLQRCIAFGM (178 aa)) is required for interaction with KAT2B. Residues 110 to 185 (FDLCVVCGDK…FGMKQDSVQC (76 aa)) constitute a DNA-binding region (nuclear receptor). NR C4-type zinc fingers lie at residues 113 to 133 (CVVC…CEGC) and 149 to 168 (CRGS…CQYC). Phosphoserine is present on residues serine 197 and serine 215. Phosphothreonine is present on threonine 220. Threonine 222 bears the Phosphothreonine; by MAPK1 mark. Lysine 250 participates in a covalent cross-link: Glycyl lysine isopeptide (Lys-Gly) (interchain with G-Cter in SUMO); alternate. Lysine 250 is covalently cross-linked (Glycyl lysine isopeptide (Lys-Gly) (interchain with G-Cter in SUMO2); alternate). The NR LBD domain maps to 348-590 (GSVHLITGDS…SVIPHILKME (243 aa)). The residue at position 581 (serine 581) is a Phosphoserine; by PKC. The required for interaction with NRIP1 stretch occupies residues 584–603 (PHILKMEPADYNSQIIGHSI). Lysine 588 participates in a covalent cross-link: Glycyl lysine isopeptide (Lys-Gly) (interchain with G-Cter in SUMO2).

The protein belongs to the nuclear hormone receptor family. NR2 subfamily. As to quaternary structure, homodimer. Heterodimer; binds DNA as a heterodimer with NR2C2 required for chromatin remodeling and for binding to promoter regions such as globin DR1 repeats. Interacts with ESR1; the interaction prevents homodimerization of ESR1 and suppresses its transcriptional activity and cell growth. Interacts with NRIP1 (via its LXXLL motifs); the interaction provides corepressor activity. Interacts with HDAC3 (via the DNA-binding domain). Interacts with HDAC4 (via the DNA-binding domain). Interacts with PIAS1; the interaction is required for sumoylation of NR2C1. Interacts with UBE2I; the interaction is required for sumoylation of NR2C1. Interacts with KAT2B; the interaction acts as a corepressor of gene expression. In terms of processing, sumoylation requires both PIAS1 and UBE2I. Sumoylation appears to dissociate NR2C1 from the PML nuclear bodies. Enhances the interaction with NRIP1 but inhibits interaction with KAT2B. In proliferating cells, stimulation by all-trans retinoic acid, activation of MAPK1-mediated phosphorylation and recruitment to PML bodies with subsequent sumoylation, suppresses OCT4 expression. Post-translationally, phosphorylated on several serine and threonine residues. Phosphorylation on Thr-220, stimulated by all-trans retinoic acid (atRA) mediates PML location and sumoylation in proliferating cells which then modulates its association with effector molecules, KAT2B and NRIP1. Phosphorylation on Ser-581 by PKC is important for protein stability and function as activator of RARB.

The protein localises to the nucleus. It is found in the PML body. Orphan nuclear receptor. Binds the IR7 element in the promoter of its own gene in an autoregulatory negative feedback mechanism. Primarily repressor of a broad range of genes. Binds to hormone response elements (HREs) consisting of two 5'-AGGTCA-3' half site direct repeat consensus sequences. Together with NR2C2, forms the core of the DRED (direct repeat erythroid-definitive) complex that represses embryonic and fetal globin transcription. Also activator of OCT4 gene expression. May be involved in stem cell proliferation and differentiation. Mediator of retinoic acid-regulated preadipocyte proliferation. The chain is Nuclear receptor subfamily 2 group C member 1 (NR2C1) from Macaca fascicularis (Crab-eating macaque).